Consider the following 290-residue polypeptide: Undecaprenyl-diphosphatase (290 aa).

The next 8 helical transmembrane spans lie at 5–25 (IGIF…YFPI), 44–64 (GTAY…TYFY), 88–108 (VRLF…GLAL), 122–142 (LSVI…SESL), 152–172 (IRVI…VPGV), 195–215 (FSFL…LKVL), 226–246 (PIVA…AWLL), and 255–275 (LVFV…LAAG).

Belongs to the UppP family.

The protein resides in the cell inner membrane. The enzyme catalyses di-trans,octa-cis-undecaprenyl diphosphate + H2O = di-trans,octa-cis-undecaprenyl phosphate + phosphate + H(+). Catalyzes the dephosphorylation of undecaprenyl diphosphate (UPP). Confers resistance to bacitracin. The protein is Undecaprenyl-diphosphatase of Gloeobacter violaceus (strain ATCC 29082 / PCC 7421).